Reading from the N-terminus, the 617-residue chain is Guanylate cyclase soluble subunit beta-2 (617 aa).

His26 contributes to the heme binding site. The region spanning 391–519 (TILFSDVVTF…DTVNTASRME (129 aa)) is the Guanylate cyclase domain. The span at 577 to 586 (RSKTPVDHKG) shows a compositional bias: basic and acidic residues. The tract at residues 577 to 605 (RSKTPVDHKGSTQKASLPTTKLQGSVQPS) is disordered. The span at 588–604 (TQKASLPTTKLQGSVQP) shows a compositional bias: polar residues.

Belongs to the adenylyl cyclase class-4/guanylyl cyclase family. In terms of assembly, heterodimer of an alpha and a beta chain. Heme serves as cofactor. As to expression, expressed in gastric signet ring cell carcinoma, but not in the normal stomach.

The protein resides in the cytoplasm. It catalyses the reaction GTP = 3',5'-cyclic GMP + diphosphate. Its activity is regulated as follows. Activated by nitric oxide in the presence of magnesium or manganese ions. The sequence is that of Guanylate cyclase soluble subunit beta-2 (GUCY1B2) from Homo sapiens (Human).